A 252-amino-acid polypeptide reads, in one-letter code: Serine/threonine phosphatase stp (252 aa).

The tract at residues 1–22 is disordered; that stretch reads MHAEFRTDRGRIRHHNEDNGGV. One can recognise a PPM-type phosphatase domain in the interval 2-242; that stretch reads HAEFRTDRGR…DNITVLLVER (241 aa). Residues Asp-36, Gly-37, Asp-194, and Asp-233 each coordinate Mn(2+).

The protein belongs to the PP2C family. The cofactor is Mn(2+).

Its subcellular location is the cytoplasm. It is found in the membrane. It catalyses the reaction O-phospho-L-seryl-[protein] + H2O = L-seryl-[protein] + phosphate. The enzyme catalyses O-phospho-L-threonyl-[protein] + H2O = L-threonyl-[protein] + phosphate. Protein phosphatase that dephosphorylates EF-Tu. The sequence is that of Serine/threonine phosphatase stp (stp) from Listeria innocua serovar 6a (strain ATCC BAA-680 / CLIP 11262).